Reading from the N-terminus, the 117-residue chain is MNSPGLRKPTIWRPLLLLFPLLALLLSMSSPRLPDEVMLHITPLHQGMTLPDGFYIYQRLNERGIAIKSITPENNSIIVRLSSPEQSGAAKEILSIALPNTVVIAQRTHGTIRVARS.

The Cytoplasmic portion of the chain corresponds to 1–9 (MNSPGLRKP). The helical transmembrane segment at 10 to 29 (TIWRPLLLLFPLLALLLSMS) threads the bilayer. At 30-117 (SPRLPDEVML…THGTIRVARS (88 aa)) the chain is on the periplasmic side.

It belongs to the MzrA family. As to quaternary structure, interacts with EnvZ.

Its subcellular location is the cell inner membrane. Modulates the activity of the EnvZ/OmpR two-component regulatory system, probably by directly modulating EnvZ enzymatic activity and increasing stability of phosphorylated OmpR. The chain is Modulator protein MzrA from Dickeya zeae (strain Ech586) (Dickeya dadantii (strain Ech586)).